The primary structure comprises 475 residues: Ankyrin repeat, SAM and basic leucine zipper domain-containing protein 1 (475 aa).

The interval 1–24 (MAAGPLRGLAVAGGGESSESEDDG) is disordered. 3 positions are modified to phosphoserine: Ser-17, Ser-18, and Ser-20. 6 ANK repeats span residues 45–74 (ERQETFKKALTSGNISLVEELLDSGISVDT), 78–107 (YGWTSLMYAASVSNVELVRVLLDRGANASF), 110–144 (DKQTVLITACSARGSEEKILKCIELLLSRNADPNV), 148–177 (RLMTPIMYAARDGHPQVVALLVAHGAEVNT), 181–210 (NGYTALTWAARQGHKNVVLKLLELGANKMI), and 214–243 (DGKTPSEIAKRNKHLEIFNFLSLTLNPLEG). The 63-residue stretch at 272 to 334 (SYTAFGDLEI…KIMAALKELE (63 aa)) folds into the SAM domain.

As to quaternary structure, interacts with DDX4, PIWIL1, RANBP9 and TDRD1.

Its subcellular location is the cytoplasm. In terms of biological role, plays a central role during spermatogenesis by repressing transposable elements and preventing their mobilization, which is essential for the germline integrity. Acts via the piRNA metabolic process, which mediates the repression of transposable elements during meiosis by forming complexes composed of piRNAs and Piwi proteins and governs the methylation and subsequent repression of transposons. Its association with pi-bodies suggests a participation in the primary piRNAs metabolic process. Required prior to the pachytene stage to facilitate the production of multiple types of piRNAs, including those associated with repeats involved in the regulation of retrotransposons. May act by mediating protein-protein interactions during germ cell maturation. This Ovis aries (Sheep) protein is Ankyrin repeat, SAM and basic leucine zipper domain-containing protein 1 (ASZ1).